A 471-amino-acid chain; its full sequence is Probable ribonuclease FAU-1 (471 aa).

Residues 93–139 form the S1 motif domain; the sequence is GAVFDAAVDHTVGGGAILDLGDDREAYLPFGAVDDHVTDGDTLRVAI.

This sequence belongs to the FAU-1 family.

Functionally, probable RNase involved in rRNA stability through maturation and/or degradation of precursor rRNAs. Binds to RNA in loop regions with AU-rich sequences. The polypeptide is Probable ribonuclease FAU-1 (Halobacterium salinarum (strain ATCC 29341 / DSM 671 / R1)).